Here is a 78-residue protein sequence, read N- to C-terminus: Large ribosomal subunit protein eL20 (78 aa).

The protein belongs to the eukaryotic ribosomal protein eL20 family. In terms of assembly, part of the 50S ribosomal subunit. Binds 23S rRNA.

The protein is Large ribosomal subunit protein eL20 of Pyrobaculum neutrophilum (strain DSM 2338 / JCM 9278 / NBRC 100436 / V24Sta) (Thermoproteus neutrophilus).